The primary structure comprises 283 residues: Pantothenate synthetase (283 aa).

ATP is bound at residue 26-33; it reads MGNLHDGH. His-33 serves as the catalytic Proton donor. Gln-57 is a (R)-pantoate binding site. A beta-alanine-binding site is contributed by Gln-57. Residue 148–151 participates in ATP binding; it reads GKKD. Residue Gln-154 participates in (R)-pantoate binding. ATP contacts are provided by residues Ala-177 and 185–188; that span reads LSSR.

The protein belongs to the pantothenate synthetase family. Homodimer.

It is found in the cytoplasm. The catalysed reaction is (R)-pantoate + beta-alanine + ATP = (R)-pantothenate + AMP + diphosphate + H(+). It participates in cofactor biosynthesis; (R)-pantothenate biosynthesis; (R)-pantothenate from (R)-pantoate and beta-alanine: step 1/1. Catalyzes the condensation of pantoate with beta-alanine in an ATP-dependent reaction via a pantoyl-adenylate intermediate. The polypeptide is Pantothenate synthetase (Delftia acidovorans (strain DSM 14801 / SPH-1)).